An 81-amino-acid chain; its full sequence is Ferredoxin (81 aa).

The 4Fe-4S ferredoxin-type domain occupies 2 to 30; it reads KYTIVDKETCIACGACGAAAPDIYDYDED. [4Fe-4S] cluster-binding residues include cysteine 11, cysteine 14, cysteine 17, and cysteine 61.

The cofactor is [4Fe-4S] cluster.

Its function is as follows. Ferredoxins are iron-sulfur proteins that transfer electrons in a wide variety of metabolic reactions. The sequence is that of Ferredoxin (fer) from Geobacillus stearothermophilus (Bacillus stearothermophilus).